The sequence spans 1838 residues: Lysine-specific demethylase 5 (1838 aa).

The tract at residues 1-150 (MSAKTEADNT…SSNKFDQGKN (150 aa)) is disordered. The segment covering 15-31 (SGGGGVGSGTSSGGGAS) has biased composition (gly residues). A compositionally biased stretch (low complexity) spans 45 to 56 (RNSTGNGTNSGS). A compositionally biased stretch (polar residues) spans 136-145 (HTQPHSSNKF). Residues 161 to 202 (CPVFRPTTEEFKNPLAYISKIRSIAEKCGIAKILPPATWSPP) form the JmjN domain. In terms of domain architecture, ARID spans 226-316 (TRVKLNFLDQ…ILHPFEVYTS (91 aa)). Low complexity predominate over residues 321 to 333 (GPTPTSSGSGSTP). Disordered stretches follow at residues 321-380 (GPTP…GLSG) and 416-437 (GSPL…KGGE). A Phosphothreonine modification is found at Thr323. Composition is skewed to polar residues over residues 351 to 361 (TRQQIAPPNET), 369 to 380 (FGNSNASCGLSG), and 416 to 430 (GSPL…TRGA). A PHD-type 1 zinc finger spans residues 448 to 498 (KYICHICNRGDVEESMLLCDGCDDSYHTFCLLPPLTSIPKGEWLCPRCVVE). The JmjC domain occupies 591 to 757 (EYAESSWNLN…MGRECVNHYS (167 aa)). 3 residues coordinate Fe cation: His637, Asp640, and His725. Residues 960–1049 (VRTRSDHNQE…LRIELQQLDL (90 aa)) adopt a coiled-coil conformation. The PHD-type 2 zinc-finger motif lies at 1293–1354 (DMFCLCKSEF…KWLCPSCVRS (62 aa)). A disordered region spans residues 1401–1462 (SSPDVSAAQE…SDADDDDDED (62 aa)). Residues 1407–1417 (AAQEAIMAQQQ) show a composition bias toward low complexity. Phosphoserine is present on residues Ser1422 and Ser1433. Acidic residues predominate over residues 1453-1462 (SDADDDDDED). A Phosphoserine modification is found at Ser1474. Residues 1548–1751 (YMQRQRQQHT…QRSQQAAQED (204 aa)) are disordered. Low complexity-rich tracts occupy residues 1576–1595 (NSPN…SNSG), 1624–1650 (GKKG…PGAD), 1658–1667 (ANGGNTNSST), 1674–1683 (SATTTPTPGS), and 1692–1736 (STTA…ATGG). Residues Ser1635 and Ser1640 each carry the phosphoserine modification. Residues 1753 to 1808 (EEECRAENCHKPTGREVDWVQCDGGCNEWFHMYCVGLNRSQIKPDDDYICIRCTKT) form a PHD-type 3 zinc finger. A disordered region spans residues 1814–1838 (QGSGHSMSVASTTTPGKQRAVQSAR).

The protein belongs to the JARID1 histone demethylase family. In terms of assembly, interacts with Myc. Part of a complex containing Lid, Myc and Ash2. Fe(2+) is required as a cofactor.

The protein localises to the nucleus. The enzyme catalyses N(6),N(6),N(6)-trimethyl-L-lysyl(4)-[histone H3] + 3 2-oxoglutarate + 3 O2 = L-lysyl(4)-[histone H3] + 3 formaldehyde + 3 succinate + 3 CO2. Inhibited by Myc. Histone demethylase that specifically demethylates 'Lys-4' of histone H3, thereby playing a central role in histone code. Does not demethylate histone H3 'Lys-9', H3 'Lys-27', H3 'Lys-36', H3 'Lys-79' or H4 'Lys-20'. Specifically demethylates trimethylated H3 'Lys-4'. Required for the correct regulation of homeotic genes during development. Plays a role in the regulation of the circadian rhythm and in maintaining the normal periodicity of the circadian clock. Regulates the expression of clock-controlled genes including tim, per and cry. The sequence is that of Lysine-specific demethylase 5 from Drosophila melanogaster (Fruit fly).